The primary structure comprises 663 residues: Leishmanolysin-like peptidase (663 aa).

H246 serves as a coordination point for Zn(2+). The active site involves E247. Zn(2+) is bound by residues H250 and H353.

Belongs to the peptidase M8 family. Zn(2+) serves as cofactor.

It is found in the cytoplasm. Its function is as follows. Essential for the coordination of mitotic progression, and also plays a role in cell migration. In Caenorhabditis elegans, this protein is Leishmanolysin-like peptidase.